A 342-amino-acid polypeptide reads, in one-letter code: C-X-C chemokine receptor type 6 (342 aa).

Residues 1 to 32 lie on the Extracellular side of the membrane; that stretch reads MAEHDYHEDYGFNSFNDSSQEEHQDFLQFSKV. The N-linked (GlcNAc...) asparagine glycan is linked to Asn-16. A helical transmembrane segment spans residues 33 to 59; the sequence is FLPCMYLVVFVCGLVGNSLVLVISIFY. Over 60 to 68 the chain is Cytoplasmic; that stretch reads HKLQSLTDV. Residues 69–89 form a helical membrane-spanning segment; that stretch reads FLVNLPLADLVFVCTLPFWAY. The Extracellular portion of the chain corresponds to 90 to 103; it reads AGIHEWVFGQVMCK. Cys-102 and Cys-180 form a disulfide bridge. A helical transmembrane segment spans residues 104–125; the sequence is SLLGIYTINFYTSMLILTCITV. Residues 126–143 are Cytoplasmic-facing; it reads DRFIVVVKATKAYNQQAK. A helical membrane pass occupies residues 144–164; it reads RMTWGKVTSLLIWVISLLVSL. Residues 165–187 lie on the Extracellular side of the membrane; sequence PQIIYGNVFNLDKLICGYHDEAI. Residues 188-215 traverse the membrane as a helical segment; the sequence is STVVLATQMTLGFFLPLLTMIVCYSVII. Topologically, residues 216 to 231 are cytoplasmic; the sequence is KTLLHAGGFQKHRSLK. The helical transmembrane segment at 232 to 259 threads the bilayer; sequence IIFLVMAVFLLTQMPFNLMKLIRSTHWE. Residues 260-275 are Extracellular-facing; that stretch reads YYAMTSFHYTIMVTEA. The chain crosses the membrane as a helical span at residues 276–293; sequence IAYLRACLNPVLYAFVSL. Topologically, residues 294 to 342 are cytoplasmic; it reads KFRKNFWKLVKDIGCLPYLGVSHQWKSSEDNSKTFSASHNVEATSMFQL.

Belongs to the G-protein coupled receptor 1 family.

It localises to the cell membrane. Receptor for the C-X-C chemokine CXCL16. Used as a coreceptor by SIVs and by strains of HIV-2 and m-tropic HIV-1. This is C-X-C chemokine receptor type 6 (CXCR6) from Pan troglodytes (Chimpanzee).